The primary structure comprises 252 residues: Acetoacetate decarboxylase (252 aa).

Residue K116 is the Schiff-base intermediate with acetoacetate of the active site.

The protein belongs to the ADC family.

It carries out the reaction acetoacetate + H(+) = acetone + CO2. Its function is as follows. Catalyzes the conversion of acetoacetate to acetone and carbon dioxide. The protein is Acetoacetate decarboxylase of Paraburkholderia xenovorans (strain LB400).